The chain runs to 700 residues: Small ribosomal subunit protein uS3c (700 aa).

Insert stretches follow at residues 88 to 196 (NCHM…LGKF) and 282 to 587 (KPCT…FQTR).

The protein belongs to the universal ribosomal protein uS3 family. As to quaternary structure, part of the 30S ribosomal subunit.

It localises to the plastid. It is found in the chloroplast. The protein is Small ribosomal subunit protein uS3c (rps3) of Tetradesmus obliquus (Green alga).